The sequence spans 245 residues: 5-oxoprolinase subunit A (245 aa).

This sequence belongs to the LamB/PxpA family. In terms of assembly, forms a complex composed of PxpA, PxpB and PxpC.

The catalysed reaction is 5-oxo-L-proline + ATP + 2 H2O = L-glutamate + ADP + phosphate + H(+). Functionally, catalyzes the cleavage of 5-oxoproline to form L-glutamate coupled to the hydrolysis of ATP to ADP and inorganic phosphate. This Neisseria meningitidis serogroup A / serotype 4A (strain DSM 15465 / Z2491) protein is 5-oxoprolinase subunit A.